Reading from the N-terminus, the 53-residue chain is Lantibiotic paenibacillin (53 aa).

A propeptide spanning residues 1 to 24 (MKVDQMFDLDLRKSYEASELSPQA) is cleaved from the precursor. At Ala-24 the chain carries N-acetylalanine. The residue at position 25 (Ser-25) is a 2,3-didehydroalanine (Ser). 2,3-didehydrobutyrine is present on residues Thr-29 and Thr-30. Positions 34-38 (SKAVC) form a cross-link, lanthionine (Ser-Cys). 3 consecutive cross-links (beta-methyllanthionine (Thr-Cys)) follow at residues 40–43 (TLTC), 42–45 (TCIC), and 46–49 (TGSC). Positions 48-52 (SCSNC) form a cross-link, lanthionine (Ser-Cys). A 2,3-didehydroalanine (Ser) modification is found at Ser-50.

Maturation of lantibiotics involves the enzymatic conversion of Thr, and Ser into dehydrated AA and the formation of thioether bonds with cysteine. This is followed by membrane translocation and cleavage of the modified precursor. In terms of processing, the structure of the 2,3-didehydrobutyrines is not discussed in PubMed:17071789.

Its subcellular location is the secreted. Its function is as follows. Lanthionine-containing peptide antibiotic (lantibiotic) active on Gram-positive bacteria. The bactericidal activity of lantibiotics is based on depolarization of energized bacterial cytoplasmic membranes, initiated by the formation of aqueous transmembrane pores. Lacks antibacterial activity against Gram-negative bacteria. The polypeptide is Lantibiotic paenibacillin (Paenibacillus polymyxa (Bacillus polymyxa)).